Consider the following 273-residue polypeptide: Ethanolamine ammonia-lyase small subunit (273 aa).

The adenosylcob(III)alamin site is built by valine 164, glutamate 185, and cysteine 214.

The protein belongs to the EutC family. As to quaternary structure, the basic unit is a heterodimer which dimerizes to form tetramers. The heterotetramers trimerize; 6 large subunits form a core ring with 6 small subunits projecting outwards. Requires adenosylcob(III)alamin as cofactor.

Its subcellular location is the bacterial microcompartment. The enzyme catalyses ethanolamine = acetaldehyde + NH4(+). It functions in the pathway amine and polyamine degradation; ethanolamine degradation. In terms of biological role, catalyzes the deamination of various vicinal amino-alcohols to oxo compounds. Allows this organism to utilize ethanolamine as the sole source of nitrogen and carbon in the presence of external vitamin B12. The sequence is that of Ethanolamine ammonia-lyase small subunit from Pseudomonas aeruginosa (strain UCBPP-PA14).